The following is a 206-amino-acid chain: Octanoyltransferase (206 aa).

The 177-residue stretch at 30 to 206 (PETNDEIWLV…EFVTLLNNSI (177 aa)) folds into the BPL/LPL catalytic domain. Substrate is bound by residues 69–76 (RGGQVTYH), 137–139 (SLG), and 150–152 (GIA). Residue Cys-168 is the Acyl-thioester intermediate of the active site.

The protein belongs to the LipB family.

The protein localises to the cytoplasm. It catalyses the reaction octanoyl-[ACP] + L-lysyl-[protein] = N(6)-octanoyl-L-lysyl-[protein] + holo-[ACP] + H(+). It functions in the pathway protein modification; protein lipoylation via endogenous pathway; protein N(6)-(lipoyl)lysine from octanoyl-[acyl-carrier-protein]: step 1/2. Its function is as follows. Catalyzes the transfer of endogenously produced octanoic acid from octanoyl-acyl-carrier-protein onto the lipoyl domains of lipoate-dependent enzymes. Lipoyl-ACP can also act as a substrate although octanoyl-ACP is likely to be the physiological substrate. This is Octanoyltransferase from Francisella tularensis subsp. tularensis (strain FSC 198).